Here is a 562-residue protein sequence, read N- to C-terminus: Ikaros family zinc finger protein (562 aa).

C2H2-type zinc fingers lie at residues 45-67 (IKCEECGLICAGQSHYNVHIRSH), 73-95 (FKCHICGVAFTQKGNLRRHYKIH), and 101-123 (FQCPICSYRCRRRDALNGHMRIH). Residues 129 to 152 (YRCSYCARSYKSRQSMKEHEYQCP) form a C2H2-type 4; degenerate zinc finger. 4 disordered regions span residues 178–210 (NPLALPGPRPSTSQPAPVLSQLGQLGARPPPYP), 293–342 (QNQQ…VKPT), 361–404 (QLED…KEDD), and 451–473 (DESKNEISSVDSRSPLDQSSTQD). Residues 307–326 (PSLSEATPSSHSSHSSAEDS) show a composition bias toward low complexity. Over residues 327-336 (GQVNKFSPTE) the composition is skewed to polar residues. Residues 369 to 383 (DSRKRPHSFESEPTP) are compositionally biased toward basic and acidic residues. Positions 456-471 (EISSVDSRSPLDQSST) are enriched in polar residues. C2H2-type zinc fingers lie at residues 494–516 (WECKTCNCIFLNEITYRIHMGVH) and 522–546 (LVCNSCGKRCSDQQEFQAHLVHHQH).

Belongs to the Ikaros C2H2-type zinc-finger protein family. In terms of tissue distribution, expression is strongest in the anterior Fol cells of the oikoplastic epithelium.

It is found in the nucleus. The protein is Ikaros family zinc finger protein of Oikopleura dioica (Tunicate).